Reading from the N-terminus, the 201-residue chain is Peptidyl-tRNA hydrolase (201 aa).

Tyr17 serves as a coordination point for tRNA. Residue His22 is the Proton acceptor of the active site. TRNA is bound by residues Tyr68, Asn70, and Asn116.

The protein belongs to the PTH family. As to quaternary structure, monomer.

It localises to the cytoplasm. It carries out the reaction an N-acyl-L-alpha-aminoacyl-tRNA + H2O = an N-acyl-L-amino acid + a tRNA + H(+). In terms of biological role, hydrolyzes ribosome-free peptidyl-tRNAs (with 1 or more amino acids incorporated), which drop off the ribosome during protein synthesis, or as a result of ribosome stalling. Functionally, catalyzes the release of premature peptidyl moieties from peptidyl-tRNA molecules trapped in stalled 50S ribosomal subunits, and thus maintains levels of free tRNAs and 50S ribosomes. The sequence is that of Peptidyl-tRNA hydrolase from Lawsonia intracellularis (strain PHE/MN1-00).